Here is a 213-residue protein sequence, read N- to C-terminus: Guanylate kinase (213 aa).

One can recognise a Guanylate kinase-like domain in the interval 10 to 189; sequence GLLLMVVAPS…AYADLAHIYH (180 aa). 17–24 is a binding site for ATP; the sequence is APSGVGKT.

It belongs to the guanylate kinase family.

The protein localises to the cytoplasm. The enzyme catalyses GMP + ATP = GDP + ADP. Essential for recycling GMP and indirectly, cGMP. The protein is Guanylate kinase (gmk) of Caulobacter vibrioides (strain ATCC 19089 / CIP 103742 / CB 15) (Caulobacter crescentus).